Consider the following 184-residue polypeptide: ADP-ribosylation factor-like protein 8b (184 aa).

The note=Mediates targeting to membranes intramembrane region spans 1–18 (MGLWDALLNWLRSLFFKQ). GTP is bound by residues 29–34 (NAGKTS), 48–51 (MIPT), 70–74 (DLGGQ), and 129–132 (NKID).

It belongs to the small GTPase superfamily. Arf family. As to quaternary structure, interacts with tubulin.

The protein resides in the late endosome membrane. Its subcellular location is the lysosome membrane. It localises to the cytoplasm. It is found in the cytoskeleton. The protein localises to the spindle. In terms of biological role, may play a role in lysosome motility. May play a role in chromosome segregation. Functionally, (Microbial infection) Component of tomato mosaic virus (ToMV) RNA replication complexes. Required for tobamovirus multiplication, especially for efficient negative-strand RNA synthesis and viral RNA capping. The sequence is that of ADP-ribosylation factor-like protein 8b from Arabidopsis thaliana (Mouse-ear cress).